A 1081-amino-acid polypeptide reads, in one-letter code: Dyslexia-associated protein KIAA0319 homolog (1081 aa).

A signal peptide spans 1-22 (MVSPPGVLSSLLLLAAMAGGSS). Residues 23 to 99 (QQCSEGRTYS…PRTTGPIRSY (77 aa)) enclose the MANSC domain. Topologically, residues 23–964 (QQCSEGRTYS…WDGESNCEWS (942 aa)) are extracellular. Disordered regions lie at residues 141–160 (LPFL…SDDY), 168–216 (LQPS…DLTP), and 228–298 (NEST…TTVE). Polar residues-rich tracts occupy residues 197–209 (ASAT…ASTE), 228–253 (NEST…TASP), and 283–298 (HNPS…TTVE). PKD domains follow at residues 345 to 436 (AVSA…VMPA), 444 to 533 (VAIV…IRGS), 539 to 629 (VANA…VQAE), 630 to 723 (NNQA…VKKE), and 729 to 820 (RAQA…VLPD). N430 and N522 each carry an N-linked (GlcNAc...) asparagine glycan. The chain crosses the membrane as a helical span at residues 965–985 (VFYVAALALTLTVLTGAVTWV). Residues 986–1081 (CICCCRRRKR…VSFGYYSKDR (96 aa)) are Cytoplasmic-facing. The short motif at 1004-1007 (YTIL) is the Endocytosis signal element.

Homodimer. Interacts with AP2M1; required for clathrin-mediated endocytosis. Post-translationally, N-glycosylated. In terms of processing, O-glycosylated. Shedding of the extracellular domain and intramembrane cleavage produce several proteolytic products. The intramembrane cleavage releases a soluble cytoplasmic polypeptide that translocates to the nucleolus. As to expression, highly expressed during development in ventricular zone, intermediate zone, cortical plate, striatum, hippocampus, and brain stem.

It localises to the cell membrane. It is found in the early endosome membrane. Functionally, involved in neuronal migration during development of the cerebral neocortex. May function in a cell autonomous and a non-cell autonomous manner and play a role in appropriate adhesion between migrating neurons and radial glial fibers. May also regulate growth and differentiation of dendrites. The polypeptide is Dyslexia-associated protein KIAA0319 homolog (Rattus norvegicus (Rat)).